A 102-amino-acid chain; its full sequence is Small ubiquitin-related modifier 1-A (102 aa).

The tract at residues 1–20 is disordered; it reads MSDQEAKPSSEDLGDKKDGG. A Ubiquitin-like domain is found at 21–98; the sequence is DYIKLKVIGQ…IEVYQEQTGG (78 aa). A Glycyl lysine isopeptide (Gly-Lys) (interchain with K-? in acceptor proteins) cross-link involves residue Gly98. Positions 99–102 are excised as a propeptide; that stretch reads HSTF.

The protein belongs to the ubiquitin family. SUMO subfamily. Interacts with sae2, ube2i, ranbp2, pias1 and pias2. Covalently attached to a number of proteins including rangap1 and ranbp2. Interacts with sox9 and sox10. In terms of processing, cleavage of precursor form by a sentrin-specific protease is necessary for function.

The protein resides in the nucleus membrane. It is found in the nucleus speckle. The protein localises to the cytoplasm. Its subcellular location is the nucleus. It localises to the PML body. The protein resides in the cell membrane. Ubiquitin-like protein that can be covalently attached to proteins as a monomer or a lysine-linked polymer. Covalent attachment via an isopeptide bond to its substrates requires prior activation by the E1 complex sae1-sae2 and linkage to the E2 enzyme ube2i. This post-translational modification on lysine residues of proteins plays a crucial role in a number of cellular processes such as nuclear transport, DNA replication and repair, mitosis and signal transduction. Polymeric sumo1 chains are also susceptible to polyubiquitination which functions as a signal for proteasomal degradation of modified proteins. The chain is Small ubiquitin-related modifier 1-A (sumo1-a) from Xenopus laevis (African clawed frog).